The chain runs to 339 residues: Anthranilate phosphoribosyltransferase (339 aa).

5-phospho-alpha-D-ribose 1-diphosphate contacts are provided by residues glycine 79, 82-83 (GD), threonine 87, 89-92 (NIST), 107-115 (KHGNRAVSS), and serine 119. Glycine 79 contacts anthranilate. Residue serine 91 participates in Mg(2+) binding. Asparagine 110 contacts anthranilate. Arginine 165 is a binding site for anthranilate. Mg(2+) contacts are provided by aspartate 224 and glutamate 225.

It belongs to the anthranilate phosphoribosyltransferase family. Homodimer. Mg(2+) serves as cofactor.

The catalysed reaction is N-(5-phospho-beta-D-ribosyl)anthranilate + diphosphate = 5-phospho-alpha-D-ribose 1-diphosphate + anthranilate. It participates in amino-acid biosynthesis; L-tryptophan biosynthesis; L-tryptophan from chorismate: step 2/5. Its function is as follows. Catalyzes the transfer of the phosphoribosyl group of 5-phosphorylribose-1-pyrophosphate (PRPP) to anthranilate to yield N-(5'-phosphoribosyl)-anthranilate (PRA). This chain is Anthranilate phosphoribosyltransferase, found in Geobacillus thermodenitrificans (strain NG80-2).